Here is a 307-residue protein sequence, read N- to C-terminus: D-alanine--D-alanine ligase (307 aa).

The ATP-grasp domain maps to 101–301 (KTVMRAAGVS…FGELVRWMVE (201 aa)). 127–182 (PLTPPYVVKPIAEGSSMGVIIVREERSHPPQILASDEWVYGEEVLAETYIAGRELT) contributes to the ATP binding site. Asp-251, Glu-268, and Asn-270 together coordinate Mg(2+).

It belongs to the D-alanine--D-alanine ligase family. Mg(2+) is required as a cofactor. Mn(2+) serves as cofactor.

The protein resides in the cytoplasm. It carries out the reaction 2 D-alanine + ATP = D-alanyl-D-alanine + ADP + phosphate + H(+). Its pathway is cell wall biogenesis; peptidoglycan biosynthesis. In terms of biological role, cell wall formation. This chain is D-alanine--D-alanine ligase, found in Methylorubrum populi (strain ATCC BAA-705 / NCIMB 13946 / BJ001) (Methylobacterium populi).